The following is a 799-amino-acid chain: Histidine biosynthesis trifunctional protein (799 aa).

A phosphoribosyl-AMP cyclohydrolase region spans residues 1–229 (MVLPILPLID…FIVEQENVGF (229 aa)). Residues 230–312 (CHLETMSCFG…FYFALAKLVA (83 aa)) are phosphoribosyl-ATP pyrophosphohydrolase. Residues 313-799 (NDVSLKDVEN…KLGLIPKDFQ (487 aa)) form a histidinol dehydrogenase region. The Zn(2+) site is built by Q618 and H621. Residues E687 and H688 contribute to the active site. Residues D721 and H780 each contribute to the Zn(2+) site.

This sequence in the C-terminal section; belongs to the histidinol dehydrogenase family. Zn(2+) is required as a cofactor.

The catalysed reaction is 1-(5-phospho-beta-D-ribosyl)-5'-AMP + H2O = 1-(5-phospho-beta-D-ribosyl)-5-[(5-phospho-beta-D-ribosylamino)methylideneamino]imidazole-4-carboxamide. It carries out the reaction 1-(5-phospho-beta-D-ribosyl)-ATP + H2O = 1-(5-phospho-beta-D-ribosyl)-5'-AMP + diphosphate + H(+). The enzyme catalyses L-histidinol + 2 NAD(+) + H2O = L-histidine + 2 NADH + 3 H(+). The protein operates within amino-acid biosynthesis; L-histidine biosynthesis; L-histidine from 5-phospho-alpha-D-ribose 1-diphosphate: step 2/9. It participates in amino-acid biosynthesis; L-histidine biosynthesis; L-histidine from 5-phospho-alpha-D-ribose 1-diphosphate: step 3/9. It functions in the pathway amino-acid biosynthesis; L-histidine biosynthesis; L-histidine from 5-phospho-alpha-D-ribose 1-diphosphate: step 9/9. The chain is Histidine biosynthesis trifunctional protein from Saccharomyces cerevisiae (strain ATCC 204508 / S288c) (Baker's yeast).